The chain runs to 152 residues: Mid1-interacting protein 1A (152 aa).

Residues 87–105 (SEDQRRKKDTSASEPVRTE) are compositionally biased toward basic and acidic residues. Residues 87 to 109 (SEDQRRKKDTSASEPVRTEEESD) form a disordered region.

This sequence belongs to the SPOT14 family. As to expression, expressed for a short period in the cells that will produce the enveloping layer (EVL).

It localises to the nucleus. The protein resides in the cytoplasm. It is found in the cytoskeleton. Its function is as follows. Involved in stabilization of microtubules. May play a role in the regulation of lipogenesis. The polypeptide is Mid1-interacting protein 1A (mid1ip1a) (Danio rerio (Zebrafish)).